A 157-amino-acid chain; its full sequence is Phosphomannomutase (157 aa).

Residue Ser98 is the Phosphoserine intermediate of the active site. Ser98 contributes to the Mg(2+) binding site.

It belongs to the phosphohexose mutase family. It depends on Mg(2+) as a cofactor.

The enzyme catalyses alpha-D-mannose 1-phosphate = D-mannose 6-phosphate. Its pathway is nucleotide-sugar biosynthesis; GDP-alpha-D-mannose biosynthesis; alpha-D-mannose 1-phosphate from D-fructose 6-phosphate: step 2/2. The protein operates within capsule biogenesis; capsule polysaccharide biosynthesis. Functionally, involved in the biosynthesis of the K2 capsular polysaccharide biosynthesis. The polypeptide is Phosphomannomutase (manB) (Klebsiella pneumoniae).